The chain runs to 537 residues: Phosphoenolpyruvate carboxykinase (ATP) (537 aa).

Residues Arg61, Tyr194, and Lys200 each contribute to the substrate site. Residues Lys200, His219, and 235-243 (GLSGTGKTT) contribute to the ATP site. Residues Lys200 and His219 each coordinate Mn(2+). Asp256 serves as a coordination point for Mn(2+). 3 residues coordinate ATP: Glu284, Arg322, and Thr448. Arg322 contacts substrate.

It belongs to the phosphoenolpyruvate carboxykinase (ATP) family. Mn(2+) serves as cofactor.

It is found in the cytoplasm. The enzyme catalyses oxaloacetate + ATP = phosphoenolpyruvate + ADP + CO2. It participates in carbohydrate biosynthesis; gluconeogenesis. Its function is as follows. Involved in the gluconeogenesis. Catalyzes the conversion of oxaloacetate (OAA) to phosphoenolpyruvate (PEP) through direct phosphoryl transfer between the nucleoside triphosphate and OAA. The sequence is that of Phosphoenolpyruvate carboxykinase (ATP) from Bradyrhizobium sp. (strain BTAi1 / ATCC BAA-1182).